Here is a 338-residue protein sequence, read N- to C-terminus: Solute carrier family 35 member G5 (338 aa).

Positions 1 to 21 (MAGSHPYFNLPDSTHPSPPSA) are disordered. Helical transmembrane passes span 37–57 (TNGL…VGPL), 67–87 (LPSL…ALPL), 105–125 (CFCA…VQVV), 160–180 (CGLL…LWTL), 190–210 (ALGY…LLVY), 221–241 (TVAF…LFVL), 250–270 (LLSW…FTCV), 281–301 (LVCA…YYVL), and 305–325 (VAPS…IITA). The 126-residue stretch at 49-174 (LPAGFVGPLS…SILGLIIIVG (126 aa)) folds into the EamA 1 domain. The EamA 2 domain occupies 272-325 (YAVTKAHPALVCAVLHSEVVVALILQYYVLHETVAPSDIMGAGIVLGSIAIITA).

Belongs to the SLC35G solute transporter family.

Its subcellular location is the membrane. This chain is Solute carrier family 35 member G5 (SLC35G5), found in Pan troglodytes (Chimpanzee).